The chain runs to 392 residues: MNKIIAANQTLTSEAVSEGHPDKIADQISDAILDEMLKVDKNAKVACEVIIAQNLVVIAGEINSPVKKNIDIKEIAKNIIKDIGYTNIDYGLDYKTITVIDAVGNQSRDIINAIEKEGSNTLGAGDQGIIFGYACDDTKNFLPAPYELANSILKKASNLRKSGAIEWLRPDSKSQVTMEYDKNRRPIKIKNIVVSHQHHPNISQKLMRQTIIEEIIKPTIQDKSILDENTTYCINPSGNFVIGGPTGDTGLTGRKIIADSYGGFARHGGGAYSGKDATKVDRSAAYMARYIAKNMVAAGISKEFELQLAYAIGIENPISIQITAGINDPKYASKILNFIVNNFDLTPNGIIEKLKLKQPIYLKTCTYGHFGKNEFEWEKLDFVKKIQTVLKK.

Residue histidine 20 participates in ATP binding. Aspartate 22 serves as a coordination point for Mg(2+). Glutamate 48 lines the K(+) pocket. Positions 61 and 106 each coordinate L-methionine. Positions 106–116 are flexible loop; it reads QSRDIINAIEK. Residues 171–173, aspartate 248, 254–255, alanine 271, and lysine 275 contribute to the ATP site; these read DSK and RK. Aspartate 248 lines the L-methionine pocket. Lysine 279 serves as a coordination point for L-methionine.

Belongs to the AdoMet synthase family. In terms of assembly, homotetramer; dimer of dimers. The cofactor is Mg(2+). Requires K(+) as cofactor.

The protein resides in the cytoplasm. It carries out the reaction L-methionine + ATP + H2O = S-adenosyl-L-methionine + phosphate + diphosphate. Its pathway is amino-acid biosynthesis; S-adenosyl-L-methionine biosynthesis; S-adenosyl-L-methionine from L-methionine: step 1/1. Its function is as follows. Catalyzes the formation of S-adenosylmethionine (AdoMet) from methionine and ATP. The overall synthetic reaction is composed of two sequential steps, AdoMet formation and the subsequent tripolyphosphate hydrolysis which occurs prior to release of AdoMet from the enzyme. This Borreliella afzelii (strain PKo) (Borrelia afzelii) protein is S-adenosylmethionine synthase.